Here is a 271-residue protein sequence, read N- to C-terminus: Oligodendrocyte transcription factor 1 (271 aa).

A disordered region spans residues 38-117 (YRQPPSSSSS…RKINSRERKR (80 aa)). The span at 43 to 61 (SSSSSSTSSTSSTSSSSTT) shows a compositional bias: low complexity. The bHLH domain occupies 105 to 164 (QLRRKINSRERKRMQDLNLAMDALREVILPYSAAHCQGAPGRKLSKIATLLLARNYILLL).

As to expression, expressed in the brain, in oligodendrocytes. Strongly expressed in oligodendrogliomas, while expression is weak to moderate in astrocytomas. Expression in glioblastomas is highly variable.

The protein resides in the nucleus. Its function is as follows. Promotes formation and maturation of oligodendrocytes, especially within the brain. Cooperates with OLIG2 to establish the pMN domain of the embryonic neural tube. The protein is Oligodendrocyte transcription factor 1 (OLIG1) of Homo sapiens (Human).